The primary structure comprises 159 residues: Urease subunit beta 2 (159 aa).

Residues 1–23 are disordered; sequence MAKEPTEAAHPQPEQTKTNHKAH.

It belongs to the urease beta subunit family. Heterotrimer of UreA (gamma), UreB (beta) and UreC (alpha) subunits. Three heterotrimers associate to form the active enzyme.

The protein resides in the cytoplasm. It catalyses the reaction urea + 2 H2O + H(+) = hydrogencarbonate + 2 NH4(+). It functions in the pathway nitrogen metabolism; urea degradation; CO(2) and NH(3) from urea (urease route): step 1/1. The sequence is that of Urease subunit beta 2 from Brucella abortus biovar 1 (strain 9-941).